A 360-amino-acid polypeptide reads, in one-letter code: Photosystem II protein D1 (360 aa).

3 consecutive transmembrane segments (helical) span residues 29 to 46, 118 to 133, and 142 to 156; these read YIGWFGVVMIPTLLTATS, HFLLGVCCYIGREWEF, and WISVAFTAPVVAASA. A chlorophyll a-binding site is contributed by H118. Residue Y126 participates in pheophytin a binding. Residues D170 and E189 each contribute to the [CaMn4O5] cluster site. The helical transmembrane segment at 197-218 threads the bilayer; sequence LHQLGVAGVFGGSLFSAMHGSL. H198 is a binding site for chlorophyll a. A quinone-binding positions include H215 and 264–265; that span reads SF. A Fe cation-binding site is contributed by H215. H272 contacts Fe cation. The helical transmembrane segment at 274–288 threads the bilayer; it reads FLGLWPVVGIWFTSM. 4 residues coordinate [CaMn4O5] cluster: H332, E333, D342, and A344. The propeptide occupies 345-360; it reads SNESLPLALVAPAING.

This sequence belongs to the reaction center PufL/M/PsbA/D family. In terms of assembly, PSII is composed of 1 copy each of membrane proteins PsbA, PsbB, PsbC, PsbD, PsbE, PsbF, PsbH, PsbI, PsbJ, PsbK, PsbL, PsbM, PsbT, PsbX, PsbY, PsbZ, Psb30/Ycf12, at least 3 peripheral proteins of the oxygen-evolving complex and a large number of cofactors. It forms dimeric complexes. It depends on The D1/D2 heterodimer binds P680, chlorophylls that are the primary electron donor of PSII, and subsequent electron acceptors. It shares a non-heme iron and each subunit binds pheophytin, quinone, additional chlorophylls, carotenoids and lipids. D1 provides most of the ligands for the Mn4-Ca-O5 cluster of the oxygen-evolving complex (OEC). There is also a Cl(-1) ion associated with D1 and D2, which is required for oxygen evolution. The PSII complex binds additional chlorophylls, carotenoids and specific lipids. as a cofactor. Tyr-161 forms a radical intermediate that is referred to as redox-active TyrZ, YZ or Y-Z. Post-translationally, C-terminally processed by CTPA; processing is essential to allow assembly of the oxygen-evolving complex and thus photosynthetic growth.

It is found in the plastid. The protein localises to the chloroplast thylakoid membrane. The enzyme catalyses 2 a plastoquinone + 4 hnu + 2 H2O = 2 a plastoquinol + O2. Photosystem II (PSII) is a light-driven water:plastoquinone oxidoreductase that uses light energy to abstract electrons from H(2)O, generating O(2) and a proton gradient subsequently used for ATP formation. It consists of a core antenna complex that captures photons, and an electron transfer chain that converts photonic excitation into a charge separation. The D1/D2 (PsbA/PsbD) reaction center heterodimer binds P680, the primary electron donor of PSII as well as several subsequent electron acceptors. This chain is Photosystem II protein D1, found in Antithamnion sp. (Red alga).